Reading from the N-terminus, the 201-residue chain is MKYMYYGIGILILSLGISLTIQSGLGTSPFDALLVGLSKKIGLTVGSWEVLISVILLICNAILTRKKPILLGLITAFITGIGIDLWLFVVKNTIYLNSLLSKLICFGIGLVLIGLGTAIYLQTKFASTPIDHLTLIIRDLSKRTILFSRTLVYALFLVLAIIFKGPIGIGTLLTVCLGGMLLHVFMPIVERHFLSKNRRGY.

This is an uncharacterized protein from Bacillus subtilis (strain 168).